A 269-amino-acid polypeptide reads, in one-letter code: Expansin-B9 (269 aa).

A signal peptide spans 1–24 (MGSLTTNIVLAVAVVAALVGGGSC). N-linked (GlcNAc...) asparagine glycosylation occurs at asparagine 34. In terms of domain architecture, Expansin-like EG45 spans 63 to 169 (GGACGIKNVN…RRVRCKYPGG (107 aa)). Disulfide bonds link cysteine 66-cysteine 94, cysteine 97-cysteine 164, and cysteine 102-cysteine 108. The Expansin-like CBD domain occupies 183-264 (NYLAVLVKFV…NWMPDAIYVS (82 aa)).

This sequence belongs to the expansin family. Expansin B subfamily.

It is found in the secreted. Its subcellular location is the cell wall. The protein resides in the membrane. Functionally, may cause loosening and extension of plant cell walls by disrupting non-covalent bonding between cellulose microfibrils and matrix glucans. No enzymatic activity has been found. May be required for rapid internodal elongation in deepwater rice during submergence. The protein is Expansin-B9 (EXPB9) of Oryza sativa subsp. japonica (Rice).